A 115-amino-acid chain; its full sequence is NADH-ubiquinone oxidoreductase chain 3 (115 aa).

The next 3 membrane-spanning stretches (helical) occupy residues 4-24, 55-75, and 87-107; these read LLAM…AFWL, FFLV…LLPI, and MMLT…YEWI.

This sequence belongs to the complex I subunit 3 family. Core subunit of respiratory chain NADH dehydrogenase (Complex I) which is composed of 45 different subunits. Interacts with TMEM186. Interacts with TMEM242.

It is found in the mitochondrion inner membrane. The catalysed reaction is a ubiquinone + NADH + 5 H(+)(in) = a ubiquinol + NAD(+) + 4 H(+)(out). Core subunit of the mitochondrial membrane respiratory chain NADH dehydrogenase (Complex I) which catalyzes electron transfer from NADH through the respiratory chain, using ubiquinone as an electron acceptor. Essential for the catalytic activity of complex I. This Neotoma floridana (Eastern woodrat) protein is NADH-ubiquinone oxidoreductase chain 3.